The sequence spans 428 residues: Adenylosuccinate synthetase (428 aa).

Residues 12–18 (GDEGKGK) and 40–42 (GHT) contribute to the GTP site. Asp-13 functions as the Proton acceptor in the catalytic mechanism. Mg(2+) is bound by residues Asp-13 and Gly-40. IMP-binding positions include 13–16 (DEGK), 38–41 (NAGH), Thr-128, Arg-142, Gln-223, Thr-238, and Arg-302. The Proton donor role is filled by His-41. Residue 298 to 304 (VTTGRPR) coordinates substrate. GTP contacts are provided by residues Arg-304, 330–332 (KLD), and 412–414 (GVG).

This sequence belongs to the adenylosuccinate synthetase family. Homodimer. It depends on Mg(2+) as a cofactor.

The protein localises to the cytoplasm. The enzyme catalyses IMP + L-aspartate + GTP = N(6)-(1,2-dicarboxyethyl)-AMP + GDP + phosphate + 2 H(+). It functions in the pathway purine metabolism; AMP biosynthesis via de novo pathway; AMP from IMP: step 1/2. Functionally, plays an important role in the de novo pathway of purine nucleotide biosynthesis. Catalyzes the first committed step in the biosynthesis of AMP from IMP. This is Adenylosuccinate synthetase from Halothermothrix orenii (strain H 168 / OCM 544 / DSM 9562).